An 867-amino-acid chain; its full sequence is Nuclear body protein SP140 (867 aa).

An HSR domain is found at 22-138 (VAEIQNVEGQ…IYRSFQNVCY (117 aa)). Disordered stretches follow at residues 260 to 341 (TYST…EEPQ), 365 to 432 (TPQV…SEEL), and 486 to 580 (IANN…KHKD). Basic and acidic residues predominate over residues 268 to 301 (KQGEEEGRNSPRKRNQDKEKYQESPEGRDKETFD). Composition is skewed to acidic residues over residues 323–341 (EGEE…EEPQ) and 384–397 (EGEE…EMCD). Over residues 404–416 (ASSSLARRGSVSS) the composition is skewed to low complexity. Basic residues-rich tracts occupy residues 494-512 (KPKR…RMRM) and 567-577 (QKRVRSRASRK). A Nuclear localization signal motif is present at residues 495–514 (PKRKRRKKRGHGWSRMRMRR). In terms of domain architecture, SAND spans 580–661 (DETVDFKAPL…RWLMENGFLP (82 aa)). Residues 690–736 (LDECEVCRDGGELFCCDTCSRVFHEDCHIPPVEAERTPWNCIFCRMK) form a PHD-type zinc finger. Thr726 is subject to Phosphothreonine. Positions 754–857 (QMCPEEQLKC…AEFEKNFKEV (104 aa)) constitute a Bromo domain.

In terms of assembly, interacts with PIN1. Phosphorylation at Thr-726 promotes binding of PIN1 and subsequent isomerization of Pro-727. In terms of tissue distribution, high levels in spleen and peripheral blood leukocytes, much lower levels in tonsils, thymus, prostate, ovary, small intestine, and colon. Very low levels in heart, brain, placenta, lung, liver, skeletal muscle, kidney, and pancreas. Not detected in brain, liver and muscle.

It is found in the nucleus. The protein resides in the PML body. Its subcellular location is the cytoplasm. Functionally, component of the nuclear body, also known as nuclear domain 10, PML oncogenic domain, and KR body. May be involved in the pathogenesis of acute promyelocytic leukemia and viral infection. May play a role in chromatin-mediated regulation of gene expression although it does not bind to histone H3 tails. This Homo sapiens (Human) protein is Nuclear body protein SP140.